The chain runs to 243 residues: Sarcospan (243 aa).

A disordered region spans residues 1–43; it reads MGKNKQPRGQQRQGGPPAADAAGPDDMEPKKGTGAPKECGEEE. Over 1-53 the chain is Cytoplasmic; the sequence is MGKNKQPRGQQRQGGPPAADAAGPDDMEPKKGTGAPKECGEEEPRTCCGCRFP. The segment covering 7–24 has biased composition (low complexity); the sequence is PRGQQRQGGPPAADAAGP. Residues 54-74 form a helical membrane-spanning segment; the sequence is LLLALLQLALGIAVTVVGFLM. Residues 75 to 86 lie on the Extracellular side of the membrane; sequence ASISSSLLVRDT. The helical transmembrane segment at 87–107 threads the bilayer; the sequence is PFWAGIIVCLVAYLGLFMLCV. At 108–122 the chain is on the cytoplasmic side; it reads SYQVDERTCIQFSMK. A helical membrane pass occupies residues 123–143; sequence LLYFLLSALGLTVCVLAVAFA. Topologically, residues 144–193 are extracellular; sequence AHHYSQLTQFTCETTLDSCQCKLPSSEPLSRTFVYRDVTDCTSVTGTFKL. A helical membrane pass occupies residues 194 to 214; the sequence is FLLIQMILNLVCGLVCLLACF. The Cytoplasmic segment spans residues 215–243; the sequence is VMWKHRYQVFYVGVRICSLTASEGPQQKI.

As to expression, isoform 1 is expressed exclusively in heart and skeletal muscle. Isoform 2 is expressed in heart, skeletal muscle, thymus, prostate, testis, ovary, small intestine, colon and spleen.

The protein resides in the cell membrane. It is found in the sarcolemma. The protein localises to the postsynaptic cell membrane. Functionally, component of the dystrophin-glycoprotein complex (DGC), a complex that spans the muscle plasma membrane and forms a link between the F-actin cytoskeleton and the extracellular matrix. Preferentially associates with the sarcoglycan subcomplex of the DGC. The protein is Sarcospan (SSPN) of Homo sapiens (Human).